A 218-amino-acid polypeptide reads, in one-letter code: Small ribosomal subunit protein uS4 (218 aa).

The S4 RNA-binding domain maps to 111–175 (RRLQTQVLRL…SPLKNESHPE (65 aa)). Positions 192–218 (KAAAEAKQAREKPPERGGGRRKRGGRR) are disordered. A compositionally biased stretch (basic and acidic residues) spans 198–209 (KQAREKPPERGG).

It belongs to the universal ribosomal protein uS4 family. In terms of assembly, part of the 30S ribosomal subunit. Contacts protein S5. The interaction surface between S4 and S5 is involved in control of translational fidelity.

Its function is as follows. One of the primary rRNA binding proteins, it binds directly to 16S rRNA where it nucleates assembly of the body of the 30S subunit. With S5 and S12 plays an important role in translational accuracy. This Methanosarcina acetivorans (strain ATCC 35395 / DSM 2834 / JCM 12185 / C2A) protein is Small ribosomal subunit protein uS4.